Reading from the N-terminus, the 177-residue chain is Transcriptional repressor NrdR (177 aa).

A zinc finger spans residues 3-34 (CLFCQHTDTRVIDSRVSEDGATIRRRRECEAC). One can recognise an ATP-cone domain in the interval 49–139 (PVIIKKDGGR…VYRSFQDVAD (91 aa)).

It belongs to the NrdR family. It depends on Zn(2+) as a cofactor.

Functionally, negatively regulates transcription of bacterial ribonucleotide reductase nrd genes and operons by binding to NrdR-boxes. The polypeptide is Transcriptional repressor NrdR (Xylella fastidiosa (strain M23)).